Consider the following 349-residue polypeptide: Anthranilate phosphoribosyltransferase (349 aa).

5-phospho-alpha-D-ribose 1-diphosphate is bound by residues glycine 86, 89 to 90 (GD), threonine 94, 96 to 99 (NIST), 114 to 122 (KHGNKSASG), and serine 126. An anthranilate-binding site is contributed by glycine 86. Serine 98 lines the Mg(2+) pocket. Asparagine 117 lines the anthranilate pocket. Arginine 172 provides a ligand contact to anthranilate. 2 residues coordinate Mg(2+): aspartate 231 and glutamate 232.

This sequence belongs to the anthranilate phosphoribosyltransferase family. Homodimer. Mg(2+) serves as cofactor.

It catalyses the reaction N-(5-phospho-beta-D-ribosyl)anthranilate + diphosphate = 5-phospho-alpha-D-ribose 1-diphosphate + anthranilate. It functions in the pathway amino-acid biosynthesis; L-tryptophan biosynthesis; L-tryptophan from chorismate: step 2/5. In terms of biological role, catalyzes the transfer of the phosphoribosyl group of 5-phosphorylribose-1-pyrophosphate (PRPP) to anthranilate to yield N-(5'-phosphoribosyl)-anthranilate (PRA). This Prochlorococcus marinus (strain MIT 9312) protein is Anthranilate phosphoribosyltransferase.